Reading from the N-terminus, the 400-residue chain is Na(+)/H(+) antiporter NhaA (400 aa).

The next 12 helical transmembrane spans lie at 26–46 (AGGI…NSPL), 71–91 (LIHW…GMEV), 107–127 (IFPA…YWFI), 137–157 (GWAI…ALLS), 166–186 (IFLL…IALF), 189–209 (HGLS…LILL), 212–232 (FKVS…ASVL), 233–253 (KSGV…PLKG), 273–293 (FVIL…GIDV), 299–319 (PLLL…IFGF), 340–360 (IFAV…LASL), and 373–393 (LSRL…YLFL).

It belongs to the NhaA Na(+)/H(+) (TC 2.A.33) antiporter family.

The protein localises to the cell inner membrane. The enzyme catalyses Na(+)(in) + 2 H(+)(out) = Na(+)(out) + 2 H(+)(in). Functionally, na(+)/H(+) antiporter that extrudes sodium in exchange for external protons. The protein is Na(+)/H(+) antiporter NhaA of Haemophilus influenzae (strain 86-028NP).